A 379-amino-acid chain; its full sequence is Probable leucine aminopeptidase ARB_01443 (379 aa).

An N-terminal signal peptide occupies residues 1 to 18 (MKIATLAVVSAFAATAIA). Positions 182 and 201 each coordinate Zn(2+). N202 and N226 each carry an N-linked (GlcNAc...) asparagine glycan. Positions 240 and 267 each coordinate Zn(2+). C312 and C316 are disulfide-bonded. H345 lines the Zn(2+) pocket.

This sequence belongs to the peptidase M28 family. M28E subfamily. As to quaternary structure, monomer. Zn(2+) serves as cofactor.

The protein resides in the secreted. Its function is as follows. Probable extracellular aminopeptidase which contributes to pathogenicity. The sequence is that of Probable leucine aminopeptidase ARB_01443 from Arthroderma benhamiae (strain ATCC MYA-4681 / CBS 112371) (Trichophyton mentagrophytes).